The sequence spans 500 residues: TBC1 domain family member 10A (500 aa).

The span at 1-10 shows a compositional bias: basic and acidic residues; sequence MAKSSRENGP. The tract at residues 1–45 is disordered; that stretch reads MAKSSRENGPREPAAGGSLSGTRESLAQGPDAATADELSSLGSDS. Phosphoserine occurs at positions 39, 40, and 45. The Rab-GAP TBC domain occupies 111 to 299; it reads GIPPSLRGRA…RVWDMFFCEG (189 aa). Disordered stretches follow at residues 396–415 and 420–500; these read AEPGPRPALQPSPSIRLPPD and SSKA…DTYL. Phosphoserine is present on S407. Over residues 438 to 453 the composition is skewed to polar residues; it reads TSAQLDKSPGLSQATV. T477 is modified (phosphothreonine). The segment at 497–500 is binding to the PDZ domain of EBP50; sequence DTYL.

In terms of assembly, binds to the first PDZ domain of NHERF1 and NHERF2. As to expression, expressed in most tissues, except for skeletal muscle.

Its subcellular location is the cell projection. It localises to the microvillus. Its function is as follows. GTPase-activating protein (GAP) specific for RAB27A and RAB35. Does not show GAP activity for RAB2A, RAB3A and RAB4A. The protein is TBC1 domain family member 10A (Tbc1d10a) of Mus musculus (Mouse).